Reading from the N-terminus, the 536-residue chain is CBS domain-containing protein CBSCBSPB2 (536 aa).

Over residues 1 to 23 the composition is skewed to low complexity; that stretch reads MTTTPTSSGRRSISSIRRTSSAS. The tract at residues 1 to 60 is disordered; it reads MTTTPTSSGRRSISSIRRTSSASKKPVLQSEESESGSGSINENTSKPDSPLAQPVSDGER. 4 CBS domains span residues 66 to 124, 132 to 187, 228 to 287, and 295 to 354; these read RLSK…LRPE, MTRN…RMEK, VTEN…LSPE, and MTPN…NNSS. The PB1 domain occupies 406–489; sequence VSSFAFKFED…KVLRLHLDFT (84 aa). Residues 509–529 form a helical membrane-spanning segment; the sequence is VWWQTGVLAGAIVLTSIGLFV.

The protein resides in the membrane. The sequence is that of CBS domain-containing protein CBSCBSPB2 (CBSCBSPB2) from Arabidopsis thaliana (Mouse-ear cress).